A 211-amino-acid polypeptide reads, in one-letter code: ATP-dependent dethiobiotin synthetase BioD 2 (211 aa).

Position 13–18 (13–18 (DIGKTI)) interacts with ATP. Mg(2+) is bound at residue T17. K38 is a catalytic residue. T42 lines the substrate pocket. Residues D50, 115–118 (EGAG), and 175–176 (NT) each bind ATP. Mg(2+) is bound by residues D50 and E115.

Belongs to the dethiobiotin synthetase family. Homodimer. Mg(2+) serves as cofactor.

It is found in the cytoplasm. It carries out the reaction (7R,8S)-7,8-diammoniononanoate + CO2 + ATP = (4R,5S)-dethiobiotin + ADP + phosphate + 3 H(+). It functions in the pathway cofactor biosynthesis; biotin biosynthesis; biotin from 7,8-diaminononanoate: step 1/2. Catalyzes a mechanistically unusual reaction, the ATP-dependent insertion of CO2 between the N7 and N8 nitrogen atoms of 7,8-diaminopelargonic acid (DAPA, also called 7,8-diammoniononanoate) to form a ureido ring. The polypeptide is ATP-dependent dethiobiotin synthetase BioD 2 (Haemophilus ducreyi (strain 35000HP / ATCC 700724)).